Consider the following 351-residue polypeptide: Beta-1,4-xylosyltransferase IRX9 (351 aa).

Over 1 to 16 (MGSLERSKKKAQVWKK) the chain is Cytoplasmic. Residues 17-36 (AVIHFSLCFVMGFFTGFAPA) form a helical; Signal-anchor for type II membrane protein membrane-spanning segment. Residues 37–351 (GKASFFSNFE…KFPTRTRLST (315 aa)) are Lumenal-facing. N64 and N74 each carry an N-linked (GlcNAc...) asparagine glycan. The interval 80 to 107 (SQSQAPAPAESREAEGETRSLSEKEDEN) is disordered. Positions 89–107 (ESREAEGETRSLSEKEDEN) are enriched in basic and acidic residues. 2 N-linked (GlcNAc...) asparagine glycosylation sites follow: N271 and N287.

This sequence belongs to the glycosyltransferase 43 family. As to expression, expressed in developing interfascicular fibers, primary and secondary xylem in stems and developing secondary xylem in roots.

It is found in the golgi apparatus membrane. It carries out the reaction [(1-&gt;4)-beta-D-xylan](n) + UDP-alpha-D-xylose = [(1-&gt;4)-beta-D-xylan](n+1) + UDP + H(+). Involved in the synthesis of the hemicellulose glucuronoxylan, a major component of secondary cell walls. Xylan xylosyltransferase that acts cooperatively with IRX14 to achieve the successive addition of xylosyl residues during xylan backbone elongation. The polypeptide is Beta-1,4-xylosyltransferase IRX9 (Arabidopsis thaliana (Mouse-ear cress)).